Here is a 178-residue protein sequence, read N- to C-terminus: Fucolectin-1 (178 aa).

The signal sequence occupies residues 1–20; the sequence is MKVKTIMLLFQILAISTIKS. The tract at residues 29-178 is F5/8 type C-like; it reads QENVAVRGKA…VEVNALLPVN (150 aa). Positions 59, 61, and 70 each coordinate Ca(2+). Intrachain disulfides connect C71-C167, C103-C104, and C129-C145. Alpha-L-fucose is bound by residues H73 and R100. Positions 100–102 match the Cell attachment site motif; sequence RGD. An alpha-L-fucose-binding site is contributed by R107. Ca(2+)-binding residues include C167 and E168.

It belongs to the fucolectin family. In terms of assembly, homotrimer. In terms of tissue distribution, parenchymal hepatocytes.

It is found in the secreted. The protein resides in the extracellular space. Its function is as follows. Acts as a defensive agent. Recognizes blood group fucosylated oligosaccharides including A, B, H and Lewis B-type antigens. Does not recognize Lewis A antigen and has low affinity for monovalent haptens. This Anguilla japonica (Japanese eel) protein is Fucolectin-1.